The primary structure comprises 317 residues: Transaldolase (317 aa).

The Schiff-base intermediate with substrate role is filled by Lys-126.

This sequence belongs to the transaldolase family. Type 1 subfamily. As to quaternary structure, homodimer.

It is found in the cytoplasm. It carries out the reaction D-sedoheptulose 7-phosphate + D-glyceraldehyde 3-phosphate = D-erythrose 4-phosphate + beta-D-fructose 6-phosphate. It functions in the pathway carbohydrate degradation; pentose phosphate pathway; D-glyceraldehyde 3-phosphate and beta-D-fructose 6-phosphate from D-ribose 5-phosphate and D-xylulose 5-phosphate (non-oxidative stage): step 2/3. Transaldolase is important for the balance of metabolites in the pentose-phosphate pathway. The polypeptide is Transaldolase (Burkholderia cenocepacia (strain ATCC BAA-245 / DSM 16553 / LMG 16656 / NCTC 13227 / J2315 / CF5610) (Burkholderia cepacia (strain J2315))).